A 609-amino-acid chain; its full sequence is Elongation factor 4 (609 aa).

Residues 11–193 (ERIRNFSIIA…QIVEKIPAPS (183 aa)) form the tr-type G domain. GTP-binding positions include 23 to 28 (DHGKST) and 140 to 143 (NKID).

It belongs to the TRAFAC class translation factor GTPase superfamily. Classic translation factor GTPase family. LepA subfamily.

It is found in the cell membrane. The catalysed reaction is GTP + H2O = GDP + phosphate + H(+). Required for accurate and efficient protein synthesis under certain stress conditions. May act as a fidelity factor of the translation reaction, by catalyzing a one-codon backward translocation of tRNAs on improperly translocated ribosomes. Back-translocation proceeds from a post-translocation (POST) complex to a pre-translocation (PRE) complex, thus giving elongation factor G a second chance to translocate the tRNAs correctly. Binds to ribosomes in a GTP-dependent manner. This Geobacillus thermodenitrificans (strain NG80-2) protein is Elongation factor 4.